The primary structure comprises 209 residues: Large ribosomal subunit protein uL3 (209 aa).

The tract at residues 127–152 (SGGPSSHGSKFHRHLGSTGQAATPSR) is disordered. The span at 143 to 152 (STGQAATPSR) shows a compositional bias: polar residues.

This sequence belongs to the universal ribosomal protein uL3 family. As to quaternary structure, part of the 50S ribosomal subunit. Forms a cluster with proteins L14 and L19.

Functionally, one of the primary rRNA binding proteins, it binds directly near the 3'-end of the 23S rRNA, where it nucleates assembly of the 50S subunit. This is Large ribosomal subunit protein uL3 from Borrelia hermsii (strain HS1 / DAH).